A 212-amino-acid chain; its full sequence is Actin-depolymerizing factor 1, isoforms a/b (212 aa).

The 157-residue stretch at 3 to 159 folds into the ADF-H domain; that stretch reads SGVMVDPDVQ…SHKELLNNCP (157 aa).

It belongs to the actin-binding proteins ADF family. As to quaternary structure, interacts with F-actin.

Functionally, depolymerizes growing actin filaments in muscle cells; required for the assembly of actin filaments into the functional contractile myofilament lattice of muscle. Competes with unc-87 for actin binding and inhibits the actin-bundling activity of unc-87. This is Actin-depolymerizing factor 1, isoforms a/b from Caenorhabditis elegans.